A 337-amino-acid chain; its full sequence is Holliday junction branch migration complex subunit RuvB (337 aa).

The tract at residues 4 to 184 (ADRLIAPAAI…FGIVQRLEFY (181 aa)) is large ATPase domain (RuvB-L). Residues Ile23, Arg24, Gly65, Lys68, Thr69, Thr70, 131–133 (EDY), Arg174, Tyr184, and Arg221 each bind ATP. Thr69 is a Mg(2+) binding site. Residues 185–255 (KVEDLAHIVG…IAAQALDMLD (71 aa)) are small ATPAse domain (RuvB-S). A head domain (RuvB-H) region spans residues 258–337 (NAGFDYMDRK…FGLTTPERQG (80 aa)). 2 residues coordinate DNA: Arg313 and Arg318.

This sequence belongs to the RuvB family. Homohexamer. Forms an RuvA(8)-RuvB(12)-Holliday junction (HJ) complex. HJ DNA is sandwiched between 2 RuvA tetramers; dsDNA enters through RuvA and exits via RuvB. An RuvB hexamer assembles on each DNA strand where it exits the tetramer. Each RuvB hexamer is contacted by two RuvA subunits (via domain III) on 2 adjacent RuvB subunits; this complex drives branch migration. In the full resolvosome a probable DNA-RuvA(4)-RuvB(12)-RuvC(2) complex forms which resolves the HJ.

It is found in the cytoplasm. It catalyses the reaction ATP + H2O = ADP + phosphate + H(+). Its function is as follows. The RuvA-RuvB-RuvC complex processes Holliday junction (HJ) DNA during genetic recombination and DNA repair, while the RuvA-RuvB complex plays an important role in the rescue of blocked DNA replication forks via replication fork reversal (RFR). RuvA specifically binds to HJ cruciform DNA, conferring on it an open structure. The RuvB hexamer acts as an ATP-dependent pump, pulling dsDNA into and through the RuvAB complex. RuvB forms 2 homohexamers on either side of HJ DNA bound by 1 or 2 RuvA tetramers; 4 subunits per hexamer contact DNA at a time. Coordinated motions by a converter formed by DNA-disengaged RuvB subunits stimulates ATP hydrolysis and nucleotide exchange. Immobilization of the converter enables RuvB to convert the ATP-contained energy into a lever motion, pulling 2 nucleotides of DNA out of the RuvA tetramer per ATP hydrolyzed, thus driving DNA branch migration. The RuvB motors rotate together with the DNA substrate, which together with the progressing nucleotide cycle form the mechanistic basis for DNA recombination by continuous HJ branch migration. Branch migration allows RuvC to scan DNA until it finds its consensus sequence, where it cleaves and resolves cruciform DNA. In Tolumonas auensis (strain DSM 9187 / NBRC 110442 / TA 4), this protein is Holliday junction branch migration complex subunit RuvB.